The chain runs to 158 residues: 6,7-dimethyl-8-ribityllumazine synthase (158 aa).

Residues F23, 61–63 (SFE), and 85–87 (AVI) contribute to the 5-amino-6-(D-ribitylamino)uracil site. (2S)-2-hydroxy-3-oxobutyl phosphate is bound at residue 90–91 (ET). Catalysis depends on H93, which acts as the Proton donor. F118 is a binding site for 5-amino-6-(D-ribitylamino)uracil. R132 is a (2S)-2-hydroxy-3-oxobutyl phosphate binding site.

The protein belongs to the DMRL synthase family.

It catalyses the reaction (2S)-2-hydroxy-3-oxobutyl phosphate + 5-amino-6-(D-ribitylamino)uracil = 6,7-dimethyl-8-(1-D-ribityl)lumazine + phosphate + 2 H2O + H(+). Its pathway is cofactor biosynthesis; riboflavin biosynthesis; riboflavin from 2-hydroxy-3-oxobutyl phosphate and 5-amino-6-(D-ribitylamino)uracil: step 1/2. Its function is as follows. Catalyzes the formation of 6,7-dimethyl-8-ribityllumazine by condensation of 5-amino-6-(D-ribitylamino)uracil with 3,4-dihydroxy-2-butanone 4-phosphate. This is the penultimate step in the biosynthesis of riboflavin. This chain is 6,7-dimethyl-8-ribityllumazine synthase, found in Prochlorococcus marinus (strain MIT 9312).